A 90-amino-acid chain; its full sequence is uncharacterized protein (90 aa).

Positions 36–82 form a coiled coil; sequence DQEYSDAQMQLEDAVNALNKLWLSSNDQQREQLYRMRLQLQSLQNNM.

This is an uncharacterized protein from Bacillus subtilis (strain 168).